The chain runs to 109 residues: Large ribosomal subunit protein uL24 (109 aa).

Belongs to the universal ribosomal protein uL24 family. Part of the 50S ribosomal subunit.

Functionally, one of two assembly initiator proteins, it binds directly to the 5'-end of the 23S rRNA, where it nucleates assembly of the 50S subunit. Its function is as follows. One of the proteins that surrounds the polypeptide exit tunnel on the outside of the subunit. This is Large ribosomal subunit protein uL24 from Legionella pneumophila (strain Corby).